Here is a 102-residue protein sequence, read N- to C-terminus: Iron-sulfur cluster assembly protein CyaY (102 aa).

This sequence belongs to the frataxin family.

Involved in iron-sulfur (Fe-S) cluster assembly. May act as a regulator of Fe-S biogenesis. The sequence is that of Iron-sulfur cluster assembly protein CyaY from Histophilus somni (strain 129Pt) (Haemophilus somnus).